A 614-amino-acid chain; its full sequence is Pyrophosphate--fructose 6-phosphate 1-phosphotransferase subunit alpha 1 (614 aa).

Belongs to the phosphofructokinase type A (PFKA) family. PPi-dependent PFK group II subfamily. Clade 'Long' sub-subfamily. Tetramer of two alpha (regulatory) and two beta (catalytic) chains. As to expression, expressed in leaves, roots, and flowers (e.g. sepals, petals, stamen and gynoecium).

The protein localises to the cytoplasm. It functions in the pathway carbohydrate degradation; glycolysis; D-glyceraldehyde 3-phosphate and glycerone phosphate from D-glucose: step 3/4. Its activity is regulated as follows. Allosterically activated by fructose 2,6-bisphosphate. Its function is as follows. Regulatory subunit of pyrophosphate--fructose 6-phosphate 1-phosphotransferase. This chain is Pyrophosphate--fructose 6-phosphate 1-phosphotransferase subunit alpha 1, found in Arabidopsis thaliana (Mouse-ear cress).